We begin with the raw amino-acid sequence, 1558 residues long: Eukaryotic translation initiation factor 2-alpha kinase 1 (1558 aa).

Residues 429 to 789 (FFEEKILGCG…AYNLLHESVL (361 aa)) enclose the Protein kinase domain. Residues 435–443 (LGCGGFGYV) and K458 contribute to the ATP site. D660 serves as the catalytic Proton acceptor. The tract at residues 1014 to 1033 (GTSTNNNNNNNNNNMGNNNI) is disordered.

The protein belongs to the protein kinase superfamily. Ser/Thr protein kinase family. GCN2 subfamily. Post-translationally, auto-phosphorylated.

It carries out the reaction L-seryl-[protein] + ATP = O-phospho-L-seryl-[protein] + ADP + H(+). The enzyme catalyses L-threonyl-[protein] + ATP = O-phospho-L-threonyl-[protein] + ADP + H(+). In terms of biological role, in blood stage parasites, phosphorylates translation factor eIF2alpha in response to amino acid starvation. During the asexual blood stage, involved in the response to the host hormone melatonin which is used by the parasite to modulate its cell cycle. This Plasmodium falciparum (isolate 3D7) protein is Eukaryotic translation initiation factor 2-alpha kinase 1.